Reading from the N-terminus, the 393-residue chain is Formate-dependent phosphoribosylglycinamide formyltransferase (393 aa).

Residues 22-23 and glutamate 82 contribute to the N(1)-(5-phospho-beta-D-ribosyl)glycinamide site; that span reads EL. ATP is bound by residues arginine 114, lysine 155, 160–165, 195–198, and glutamate 203; these read SSGKGQ and EGFV. The region spanning 119–308 is the ATP-grasp domain; sequence RLAAEELGLP…EFALHVRAFT (190 aa). Mg(2+) contacts are provided by glutamate 267 and glutamate 279. Residues aspartate 286, lysine 356, and 363–364 contribute to the N(1)-(5-phospho-beta-D-ribosyl)glycinamide site; that span reads RR.

The protein belongs to the PurK/PurT family. As to quaternary structure, homodimer.

The catalysed reaction is N(1)-(5-phospho-beta-D-ribosyl)glycinamide + formate + ATP = N(2)-formyl-N(1)-(5-phospho-beta-D-ribosyl)glycinamide + ADP + phosphate + H(+). Its pathway is purine metabolism; IMP biosynthesis via de novo pathway; N(2)-formyl-N(1)-(5-phospho-D-ribosyl)glycinamide from N(1)-(5-phospho-D-ribosyl)glycinamide (formate route): step 1/1. In terms of biological role, involved in the de novo purine biosynthesis. Catalyzes the transfer of formate to 5-phospho-ribosyl-glycinamide (GAR), producing 5-phospho-ribosyl-N-formylglycinamide (FGAR). Formate is provided by PurU via hydrolysis of 10-formyl-tetrahydrofolate. The protein is Formate-dependent phosphoribosylglycinamide formyltransferase of Vibrio cholerae serotype O1 (strain M66-2).